Here is a 698-residue protein sequence, read N- to C-terminus: Quillaic acid 3-O-glycosyltransferase CSL1 (698 aa).

The helical transmembrane segment at 14 to 34 threads the bilayer; it reads ALLSRLHILFHSALVASVFYY. Asn38 carries N-linked (GlcNAc...) asparagine glycosylation. A helical transmembrane segment spans residues 42–62; the sequence is GPAWALMTFAELTLAFIWALT. UDP-alpha-D-glucose contacts are provided by Lys99 and Glu100. Asp129 is an active-site residue. An N-linked (GlcNAc...) asparagine glycan is attached at Asn317. Ser436 is an active-site residue. 6 consecutive transmembrane segments (helical) span residues 478–498, 508–528, 546–566, 581–601, 636–656, and 669–689; these read WTSGLIGVGISKFSPFTYAMS, YAYFAFSGLFAVFFLIYGVVL, WLLAFAGVFISSLLQHLYEVL, IWIIKSITACLFGLLDAMLNK, MFMVPLMILVVFNLVSFFGGL, and FAQLFLSLFILALSYPIMEEI.

Belongs to the glycosyltransferase 2 family. Plant cellulose synthase-like G subfamily. As to expression, mainly expressed in flowers and flower buds and, to a lesser extent, in leaves, stems and roots.

The protein localises to the golgi apparatus membrane. Its pathway is secondary metabolite biosynthesis; terpenoid biosynthesis. In terms of biological role, component of the oleanane-type triterpene saponins (e.g. saponarioside A and saponarioside B) biosynthetic pathway, leading to the production of natural products with detergent properties used as traditional sources of soap. Glycosyltransferase that mediates the conversion of quillaic acid (QA) to QA-mono via the initiation of the C-3 sugar chain. In Saponaria officinalis (Common soapwort), this protein is Quillaic acid 3-O-glycosyltransferase CSL1.